Here is a 601-residue protein sequence, read N- to C-terminus: Elongation factor 4 (601 aa).

The tr-type G domain maps to aspartate 6–arginine 188. GTP-binding positions include aspartate 18–threonine 23 and asparagine 135–aspartate 138.

The protein belongs to the TRAFAC class translation factor GTPase superfamily. Classic translation factor GTPase family. LepA subfamily.

It is found in the cell inner membrane. It catalyses the reaction GTP + H2O = GDP + phosphate + H(+). In terms of biological role, required for accurate and efficient protein synthesis under certain stress conditions. May act as a fidelity factor of the translation reaction, by catalyzing a one-codon backward translocation of tRNAs on improperly translocated ribosomes. Back-translocation proceeds from a post-translocation (POST) complex to a pre-translocation (PRE) complex, thus giving elongation factor G a second chance to translocate the tRNAs correctly. Binds to ribosomes in a GTP-dependent manner. This chain is Elongation factor 4, found in Mesorhizobium japonicum (strain LMG 29417 / CECT 9101 / MAFF 303099) (Mesorhizobium loti (strain MAFF 303099)).